We begin with the raw amino-acid sequence, 343 residues long: Dihydroorotase (343 aa).

Zn(2+)-binding residues include His-13 and His-15. Substrate-binding positions include 15-17 and Asn-41; that span reads HLR. Lys-99, His-136, and His-174 together coordinate Zn(2+). The residue at position 99 (Lys-99) is an N6-carboxylysine. His-136 is a substrate binding site. Leu-219 is a substrate binding site. Zn(2+) is bound at residue Asp-247. Asp-247 is an active-site residue. Substrate-binding residues include His-251 and Ala-263.

This sequence belongs to the metallo-dependent hydrolases superfamily. DHOase family. Class II DHOase subfamily. Homodimer. Zn(2+) serves as cofactor.

It catalyses the reaction (S)-dihydroorotate + H2O = N-carbamoyl-L-aspartate + H(+). It functions in the pathway pyrimidine metabolism; UMP biosynthesis via de novo pathway; (S)-dihydroorotate from bicarbonate: step 3/3. Catalyzes the reversible cyclization of carbamoyl aspartate to dihydroorotate. The sequence is that of Dihydroorotase from Shewanella baltica (strain OS223).